The primary structure comprises 367 residues: ITLHRLAELVLPLGWFVPVPPGEERVTVGGAVGADLHGPNHHRAGSFARHLLAFELLTADGTVHVVDRGTPLFDATTGGLGLTGVVLTATLQLQPVATSLLLTGSARATDLDDLMARLCDADLRHTYASARVDLLARGAATGRGTVLHADHAPPEALPARLARRPLAARPQLPAPPQLPPGLVPQLTPDRPLGRRALGLLHDLRHRAAPRRRAGTLRGLAAALPVLDGGHALGRGEGTVAYRCAVGHGCEDVLRHLVRRVADEGCATRPGLLKRFGVGSPGWLSFPARGWGLSLELPARATGLTALLDELDEEVAAAGGRVCLARDSRVRPELLDAMYPLLDDFRELRAAVDPSSVFTSDLARRLGL.

Positions 1-96 (ITLHRLAELV…LTATLQLQPV (96 aa)) constitute an FAD-binding PCMH-type domain.

It to M.tuberculosis Rv3790.

This is an uncharacterized protein from Streptomyces coelicolor.